The sequence spans 122 residues: Small ribosomal subunit protein uS13 (122 aa).

The segment at 95 to 122 (GLPVHGQRTKTNARTRKGPARTVAGKKK) is disordered.

This sequence belongs to the universal ribosomal protein uS13 family. Part of the 30S ribosomal subunit. Forms a loose heterodimer with protein S19. Forms two bridges to the 50S subunit in the 70S ribosome.

Its function is as follows. Located at the top of the head of the 30S subunit, it contacts several helices of the 16S rRNA. In the 70S ribosome it contacts the 23S rRNA (bridge B1a) and protein L5 of the 50S subunit (bridge B1b), connecting the 2 subunits; these bridges are implicated in subunit movement. Contacts the tRNAs in the A and P-sites. In Geotalea uraniireducens (strain Rf4) (Geobacter uraniireducens), this protein is Small ribosomal subunit protein uS13.